The primary structure comprises 310 residues: MESDPNPSAWNQYINPRDCTQGLCSTFCPQWCTYINFSPPPISYEQFLNDGVASNPNLSPLVIAIFGIFATAFLLAAYYTLVSKYCANDTTNEAASESGRSDIILDVNSPERGDQDDPFALESSTAGLDDTLIKKIGFFKLKKHQNGFKINGTDCSICLGEFNEDESLRLLPKCNHTFHVVCIDRWLKSHSNCPLCRAKIIVPTTQQPEHHVVVMNLDRFTSNVGSAEGNVVVDDHREEVSVSISSHHPSWFSAADIVLRISRDGEEEEGNYDLENGNREKLVDLKRSFSSGGLVLGTQGRTRRSLNICP.

The helical transmembrane segment at 62–82 threads the bilayer; that stretch reads VIAIFGIFATAFLLAAYYTLV. The RING-type; atypical zinc-finger motif lies at 155–197; sequence CSICLGEFNEDESLRLLPKCNHTFHVVCIDRWLKSHSNCPLCR.

The protein belongs to the RING-type zinc finger family. ATL subfamily.

Its subcellular location is the membrane. The enzyme catalyses S-ubiquitinyl-[E2 ubiquitin-conjugating enzyme]-L-cysteine + [acceptor protein]-L-lysine = [E2 ubiquitin-conjugating enzyme]-L-cysteine + N(6)-ubiquitinyl-[acceptor protein]-L-lysine.. Its pathway is protein modification; protein ubiquitination. The chain is Putative RING-H2 finger protein ATL53 (ATL53) from Arabidopsis thaliana (Mouse-ear cress).